The chain runs to 405 residues: Elongation factor Tu (405 aa).

One can recognise a tr-type G domain in the interval 10 to 215; it reads KPHVNVGTIG…AIDAYIPTPE (206 aa). Residues 19–26 are G1; the sequence is GHVDHGKT. 19–26 lines the GTP pocket; it reads GHVDHGKT. Thr-26 serves as a coordination point for Mg(2+). The tract at residues 61–65 is G2; it reads GITIN. Positions 82–85 are G3; it reads DCPG. Residues 82-86 and 137-140 each bind GTP; these read DCPGH and NKVD. Residues 137 to 140 are G4; that stretch reads NKVD. The tract at residues 175–177 is G5; sequence SAL.

Belongs to the TRAFAC class translation factor GTPase superfamily. Classic translation factor GTPase family. EF-Tu/EF-1A subfamily. In terms of assembly, monomer.

The protein resides in the cytoplasm. It catalyses the reaction GTP + H2O = GDP + phosphate + H(+). GTP hydrolase that promotes the GTP-dependent binding of aminoacyl-tRNA to the A-site of ribosomes during protein biosynthesis. The chain is Elongation factor Tu from Deinococcus geothermalis (strain DSM 11300 / CIP 105573 / AG-3a).